The following is a 444-amino-acid chain: Sensor protein CiaH (444 aa).

2 helical membrane passes run 21–41 (FGVFTLIFSTMTLIILQVMHS) and 183–203 (LIVVVMASFWILSLLASLYLA). The 216-residue stretch at 223–438 (NASHELRTPL…IFEVKIAIQT (216 aa)) folds into the Histidine kinase domain. Position 226 is a phosphohistidine; by autocatalysis (His226).

It is found in the cell membrane. It carries out the reaction ATP + protein L-histidine = ADP + protein N-phospho-L-histidine.. Its function is as follows. Member of the two-component regulatory system CiaH/CiaR. Involved in early steps of competence regulation and in penicillin susceptibility. Probably phosphorylates CiaR. This is Sensor protein CiaH (ciaH) from Streptococcus pneumoniae serotype 4 (strain ATCC BAA-334 / TIGR4).